A 1669-amino-acid chain; its full sequence is Polycomb group protein Asx (1669 aa).

The tract at residues 90–109 is disordered; the sequence is IPPEKKPMAPSEEAAVSTAP. Residues 215–338 enclose the DEUBAD domain; that stretch reads PDSILASTNL…FEPFWGEKNS (124 aa). 2 short sequence motifs (LXXLL motif) span residues 224–228 and 244–248; these read LRALL and LIQLL. Residues 283 to 285 carry the NEF motif motif; sequence NEF. The span at 336–352 shows a compositional bias: basic and acidic residues; it reads KNSRGKDKDKLESDCKN. Disordered regions lie at residues 336 to 378, 410 to 478, 635 to 718, 952 to 972, 1174 to 1193, 1398 to 1437, 1482 to 1505, and 1587 to 1610; these read KNSR…QQAT, SSTF…IVPN, FFTS…SAGA, MPHQASQQPQQNAQSNAQQQR, QQQSPPVPAPQQQTVQQQQL, PGPGGATATAQQLQMLQQHHQSTTSPVPVQNPQQPAPEQL, LHSINGIPMGGRGRPASVDTTAGS, and SPTAAPSPINQQPQSQPTGTQHQH. Polar residues-rich tracts occupy residues 367-378, 413-425, and 434-450; these read ATSQQKPLQQAT, FPPTGSQNNVLNE, and PSSSPSQRKQAPTTIAT. Residues 465 to 474 show a composition bias toward basic and acidic residues; sequence KDSKQPKMDE. Residues 635–650 are compositionally biased toward low complexity; it reads FFTSSSSSNTATTAAN. Positions 651 to 661 are enriched in basic and acidic residues; it reads KLEEHSDKPED. Over residues 666–718 the composition is skewed to low complexity; that stretch reads IASSISGSTPASSITSTSCTSSSSSSASMSSSCSSSNSGSTTTAPTTSSSAGA. Low complexity-rich tracts occupy residues 1174–1192 and 1404–1436; these read QQQSPPVPAPQQQTVQQQQ and TATAQQLQMLQQHHQSTTSPVPVQNPQQPAPEQ. Residues 1592–1610 are compositionally biased toward low complexity; the sequence is PSPINQQPQSQPTGTQHQH. The PHD-type; atypical zinc-finger motif lies at 1602 to 1666; the sequence is QPTGTQHQHP…IGAAKLCVAC (65 aa).

The protein belongs to the Asx family. In terms of assembly, component of the polycomb repressive deubiquitinase (PR-DUB) complex, at least composed of caly/calypso, Asx and sba (MBD5/6 homolog). Interacts (via DEUBAD domain) with caly/calypso (via ULD domain); the interaction produces a stable heterodimer with a composite binding site for ubiquitin. Two copies of the caly-Asx heterodimer assemble into a bidentate tetramer. Interacts (via PHD domain) with sba (probably via MBD domain); the interaction is important for the stability of the PR-DUB complex. Interacts with tant. Interacts with cyclin CycG. As to expression, highly expressed in nurse cells and deposited in oocytes late in oogenesis. Ubiquitous in early embryos. Late embryos show higher levels in CNS and neurectoderm.

Its subcellular location is the nucleus. It is found in the chromosome. In terms of biological role, non-catalytic component of the polycomb repressive deubiquitinase (PR-DUB) complex, a complex that specifically mediates deubiquitination of histone H2A monoubiquitinated at 'Lys-119' (H2AK118ub1). Activator of the PR-DUB complex involved in ubiquitin binding and allosteric activation of calypso deubiquitinase activity. PR-DUB does not deubiquitinate monoubiquitinated histone H2B. PR-DUB is required to maintain the transcriptionally repressive state of homeotic genes throughout development. The PR-DUB complex has weak or no activity toward 'Lys-48'- and 'Lys-63'-linked polyubiquitin chains. Atypical Polycomb group protein, which may be involved in both Polycomb group (PcG) and trithorax group (trxG) complexes. PcG and trxG proteins act by forming multiprotein complexes, which are respectively required to maintain the transcriptionally repressive and transcriptionally active state of homeotic genes throughout development. PcG and trxG protein complexes are not required to initiate repression and activation, but to maintain it during later stages of development. This chain is Polycomb group protein Asx, found in Drosophila melanogaster (Fruit fly).